Here is a 64-residue protein sequence, read N- to C-terminus: uncharacterized protein (64 aa).

Residues V41 to I61 traverse the membrane as a helical segment.

It localises to the membrane. This is an uncharacterized protein from Acheta domesticus (House cricket).